Here is a 530-residue protein sequence, read N- to C-terminus: NMDA receptor synaptonuclear signaling and neuronal migration factor (530 aa).

G2 is lipidated: N-myristoyl glycine. Residues 2–233 (GAAASRRRAL…FSFQTATTTM (232 aa)) form a necessary and sufficient to elicit dendritic processes and synaptic contacts region. Disordered regions lie at residues 34–67 (SQSHPENRNGADHLLADAYSGHDGSPEMQPAPQN) and 125–197 (KGRR…GRRK). Residues 38–48 (PENRNGADHLL) are compositionally biased toward basic and acidic residues. Residues 125 to 137 (KGRRQRHPHHHSQ) are compositionally biased toward basic residues. Over residues 153-162 (PCQSWAGSRQ) the composition is skewed to polar residues. S204 carries the post-translational modification Phosphoserine. The Nuclear localization signal motif lies at 247–250 (RRKR). The tract at residues 285-312 (RSFSRSWSDPTPMKADTSHDSRDSSDLQ) is disordered. Residues S290 and S292 each carry the phosphoserine modification. A compositionally biased stretch (basic and acidic residues) spans 300-309 (DTSHDSRDSS).

This sequence belongs to the NSMF family. In terms of assembly, interacts with KPNA1; the interaction occurs in a calcium-independent manner after synaptic NMDA receptor stimulation and is required for nuclear import of NSMF but is competed by CABP1. Interacts (via the central NLS-containing motif region) with CABP1 (via EF-hands 1 and 2); the interaction occurs in a calcium-dependent manner after synaptic NMDA receptor stimulation and prevents the nuclear import of NSMF. Cannot be competed by calmodulin. Post-translationally, proteolytically processed after NMDA receptor activation. Cleaved in a calcium-dependent and calpain-sensitive manner. Calpain cleavage is essential for the translocation process from dendrites to the nucleus. In terms of tissue distribution, highly expressed in adult and fetal brain. Weakly expressed in heart, liver, spleen, testis, small intestine, skeletal muscle, peripheral white blood cells and kidney.

The protein localises to the nucleus. It localises to the nucleus envelope. It is found in the nucleus membrane. The protein resides in the nucleus matrix. Its subcellular location is the cytoplasm. The protein localises to the cell cortex. It localises to the cytoskeleton. It is found in the cell membrane. The protein resides in the cell projection. Its subcellular location is the dendrite. The protein localises to the synapse. It localises to the synaptosome. It is found in the postsynaptic density. The protein resides in the membrane. Couples NMDA-sensitive glutamate receptor signaling to the nucleus and triggers long-lasting changes in the cytoarchitecture of dendrites and spine synapse processes. Part of the cAMP response element-binding protein (CREB) shut-off signaling pathway. Stimulates outgrowth of olfactory axons and migration of gonadotropin-releasing hormone (GnRH) and luteinizing-hormone-releasing hormone (LHRH) neuronal cells. This chain is NMDA receptor synaptonuclear signaling and neuronal migration factor (NSMF), found in Homo sapiens (Human).